Consider the following 418-residue polypeptide: Peptide chain release factor subunit 1 (418 aa).

It belongs to the eukaryotic release factor 1 family. Heterodimer of two subunits, one of which binds GTP.

The protein resides in the cytoplasm. Directs the termination of nascent peptide synthesis (translation) in response to the termination codons UAA, UAG and UGA. In Haloarcula marismortui (strain ATCC 43049 / DSM 3752 / JCM 8966 / VKM B-1809) (Halobacterium marismortui), this protein is Peptide chain release factor subunit 1.